The following is a 486-amino-acid chain: Glycogen synthase (486 aa).

Lysine 20 lines the ADP-alpha-D-glucose pocket.

It belongs to the glycosyltransferase 1 family. Bacterial/plant glycogen synthase subfamily.

It catalyses the reaction [(1-&gt;4)-alpha-D-glucosyl](n) + ADP-alpha-D-glucose = [(1-&gt;4)-alpha-D-glucosyl](n+1) + ADP + H(+). Its pathway is glycan biosynthesis; glycogen biosynthesis. In terms of biological role, synthesizes alpha-1,4-glucan chains using ADP-glucose. This is Glycogen synthase from Aeromonas hydrophila subsp. hydrophila (strain ATCC 7966 / DSM 30187 / BCRC 13018 / CCUG 14551 / JCM 1027 / KCTC 2358 / NCIMB 9240 / NCTC 8049).